A 201-amino-acid chain; its full sequence is MLYMDDECQKLLAEKEAIIRELQEKVKELEAKLKSYEIREVYKGIIPDDVLEEFVKLPPEQMIIEIGRYLREKGSTGQVEAKKTVNDVRQEIASVEEEVSKAEKEIEKTISTITGAAKTKVGVDLTFTQKYDYEGSDVAFLAEDIMNAIGVKEGEYVSVKKNGTVNLRVLPYSKEGFIVVPTWVREKLGVKVNDFVEVVRR.

Coiled coils occupy residues 3-43 and 76-120; these read YMDD…EVYK and TGQV…AKTK.

This is an uncharacterized protein from Archaeoglobus fulgidus (strain ATCC 49558 / DSM 4304 / JCM 9628 / NBRC 100126 / VC-16).